We begin with the raw amino-acid sequence, 407 residues long: MSASKIPLFKMKGLILFLSLVKMSLAVPAFPQQPGAQGMAPPGMASLSLETMRQLGSLQGLNALSQYSRLGFGKALNSLWLHGLLPPHNSFPWIGPREHETQQPSLQPHQPGLKPFLQPTAATGVQVTPQKPGPQPPMHPGQLPLQEGELIAPDEPQVAPSENPPTPEVPIMDFADPQFPTVFQIARSISRGPMAHNKASAFYPGMFYMSYGANQLNAPARIGFMSSEEMPGERGSPMAYGTLFPRFGGFRQTLRRLNQNSPKGGDFTVEVDSPVSVTKGPEKGEGPEGSPLQEANPGKRENPALLSQMAPGAHAGLLAFPNDHIPSMARGPAGQRLLGVTPAAADPLITPELAEVYETYGADVTTPLGDGEATMDITMSPDTQQPLLPGNKVHQPQVHNAWRFQEP.

An N-terminal signal peptide occupies residues 1-26 (MSASKIPLFKMKGLILFLSLVKMSLA). Pro-42 carries the hydroxyproline modification. The residue at position 48 (Ser-48) is a Phosphoserine. Disordered stretches follow at residues 124-143 (GVQVTPQKPGPQPPMHPGQL) and 259-304 (QNSP…ENPA).

Belongs to the ameloblastin family. In terms of tissue distribution, ameloblast-specific.

Its subcellular location is the secreted. The protein resides in the extracellular space. It localises to the extracellular matrix. Functionally, involved in the mineralization and structural organization of enamel. The polypeptide is Ameloblastin (Ambn) (Mus musculus (Mouse)).